Consider the following 173-residue polypeptide: Shikimate kinase (173 aa).

Residue 14–19 participates in ATP binding; that stretch reads GAGKST. Mg(2+) is bound at residue Ser18. Substrate-binding residues include Asp36, Arg60, and Gly82. ATP is bound at residue Lys120. Arg140 serves as a coordination point for substrate.

It belongs to the shikimate kinase family. As to quaternary structure, monomer. Mg(2+) serves as cofactor.

Its subcellular location is the cytoplasm. The catalysed reaction is shikimate + ATP = 3-phosphoshikimate + ADP + H(+). The protein operates within metabolic intermediate biosynthesis; chorismate biosynthesis; chorismate from D-erythrose 4-phosphate and phosphoenolpyruvate: step 5/7. Functionally, catalyzes the specific phosphorylation of the 3-hydroxyl group of shikimic acid using ATP as a cosubstrate. The protein is Shikimate kinase (aroK) of Wigglesworthia glossinidia brevipalpis.